Consider the following 195-residue polypeptide: dTTP/UTP pyrophosphatase (195 aa).

Residue Asp-76 is the Proton acceptor of the active site.

Belongs to the Maf family. YhdE subfamily. A divalent metal cation is required as a cofactor.

The protein resides in the cytoplasm. It carries out the reaction dTTP + H2O = dTMP + diphosphate + H(+). The catalysed reaction is UTP + H2O = UMP + diphosphate + H(+). Functionally, nucleoside triphosphate pyrophosphatase that hydrolyzes dTTP and UTP. May have a dual role in cell division arrest and in preventing the incorporation of modified nucleotides into cellular nucleic acids. The protein is dTTP/UTP pyrophosphatase of Shewanella frigidimarina (strain NCIMB 400).